Consider the following 433-residue polypeptide: Nuclear distribution protein PAC1 (433 aa).

One can recognise a LisH domain in the interval 8–40 (QKDELHRAMLAYLHAAGMHNAYAALQHDAALAD). Positions 57–84 (SVIRLQKKVIDLENRNAALLAELAAAAR) form a coiled coil. 7 WD repeats span residues 103–144 (SHRA…RTLK), 146–184 (HTKAVMDVDFDPRGGLMATCSSDLTLKLWDTANQYTNVK), 188–227 (GHDHSVSSVRFMPDGETLVSASRDKTIRVWQVSSGYCIKT), 230–269 (GHAEWVREAVPSEDGRWLVSASNDQTSRIWDFSTGETKME), 272–336 (GHEH…CLRT), 339–378 (GHDNWIRALVFHPSGKYLLSASDDKTIKVWDLANGRCTKT), and 381–429 (AHSH…QTIK).

The protein belongs to the WD repeat LIS1/nudF family. Self-associates. Interacts with NDL1 and dynein.

Its subcellular location is the cytoplasm. The protein localises to the cytoskeleton. It is found in the spindle pole. Its function is as follows. Positively regulates the activity of the minus-end directed microtubule motor protein dynein. Plays a central role in positioning the mitotic spindle at the bud neck during cell division. Targets cytoplasmic dynein to microtubule plus ends, thereby promoting dynein-mediated microtubule sliding along the bud cortex and consequently the movement of the mitotic spindle to the bud neck. In Cryptococcus neoformans var. neoformans serotype D (strain B-3501A) (Filobasidiella neoformans), this protein is Nuclear distribution protein PAC1.